Reading from the N-terminus, the 95-residue chain is Co-chaperonin GroES (95 aa).

It belongs to the GroES chaperonin family. As to quaternary structure, heptamer of 7 subunits arranged in a ring. Interacts with the chaperonin GroEL.

The protein resides in the cytoplasm. Its function is as follows. Together with the chaperonin GroEL, plays an essential role in assisting protein folding. The GroEL-GroES system forms a nano-cage that allows encapsulation of the non-native substrate proteins and provides a physical environment optimized to promote and accelerate protein folding. GroES binds to the apical surface of the GroEL ring, thereby capping the opening of the GroEL channel. In Chlorobaculum parvum (strain DSM 263 / NCIMB 8327) (Chlorobium vibrioforme subsp. thiosulfatophilum), this protein is Co-chaperonin GroES.